The primary structure comprises 274 residues: Large ribosomal subunit protein uL2cz/uL2cy (274 aa).

The interval 224–274 (NPVDHPHGGGEGRAPIGRKKPATPWGYPALGRRSRKRNKYSDNLILRRRSK) is disordered.

The protein belongs to the universal ribosomal protein uL2 family. As to quaternary structure, part of the 50S ribosomal subunit.

It localises to the plastid. Its subcellular location is the chloroplast. The sequence is that of Large ribosomal subunit protein uL2cz/uL2cy (rpl2-A) from Carica papaya (Papaya).